The primary structure comprises 115 residues: NADH-ubiquinone oxidoreductase chain 3 (115 aa).

3 helical membrane passes run 3–23, 55–75, and 84–104; these read LMLT…IAFW, FFLV…LLPL, and LNTM…SLAY.

It belongs to the complex I subunit 3 family. In terms of assembly, core subunit of respiratory chain NADH dehydrogenase (Complex I) which is composed of 45 different subunits. Interacts with TMEM186. Interacts with TMEM242.

It localises to the mitochondrion inner membrane. It carries out the reaction a ubiquinone + NADH + 5 H(+)(in) = a ubiquinol + NAD(+) + 4 H(+)(out). Functionally, core subunit of the mitochondrial membrane respiratory chain NADH dehydrogenase (Complex I) which catalyzes electron transfer from NADH through the respiratory chain, using ubiquinone as an electron acceptor. Essential for the catalytic activity of complex I. The protein is NADH-ubiquinone oxidoreductase chain 3 of Equus caballus (Horse).